The primary structure comprises 242 residues: Biosynthetic peptidoglycan transglycosylase (242 aa).

Residues 21-41 (VALVVFWGGGIALFSVVPVPF) traverse the membrane as a helical segment.

The protein belongs to the glycosyltransferase 51 family.

It is found in the cell inner membrane. It carries out the reaction [GlcNAc-(1-&gt;4)-Mur2Ac(oyl-L-Ala-gamma-D-Glu-L-Lys-D-Ala-D-Ala)](n)-di-trans,octa-cis-undecaprenyl diphosphate + beta-D-GlcNAc-(1-&gt;4)-Mur2Ac(oyl-L-Ala-gamma-D-Glu-L-Lys-D-Ala-D-Ala)-di-trans,octa-cis-undecaprenyl diphosphate = [GlcNAc-(1-&gt;4)-Mur2Ac(oyl-L-Ala-gamma-D-Glu-L-Lys-D-Ala-D-Ala)](n+1)-di-trans,octa-cis-undecaprenyl diphosphate + di-trans,octa-cis-undecaprenyl diphosphate + H(+). It functions in the pathway cell wall biogenesis; peptidoglycan biosynthesis. Its function is as follows. Peptidoglycan polymerase that catalyzes glycan chain elongation from lipid-linked precursors. The chain is Biosynthetic peptidoglycan transglycosylase from Salmonella arizonae (strain ATCC BAA-731 / CDC346-86 / RSK2980).